The following is a 248-amino-acid chain: Small ribosomal subunit protein uS3 (248 aa).

One can recognise a KH type-2 domain in the interval 39 to 111 (IRKYLNKVYK…EIVFNVVEVK (73 aa)). Residues 222–248 (KPFEASAPRPQRRNRKEANNYVNAKKN) form a disordered region.

The protein belongs to the universal ribosomal protein uS3 family. Part of the 30S ribosomal subunit. Forms a tight complex with proteins S10 and S14.

Binds the lower part of the 30S subunit head. Binds mRNA in the 70S ribosome, positioning it for translation. This Alteracholeplasma palmae (strain ATCC 49389 / J233) (Acholeplasma palmae) protein is Small ribosomal subunit protein uS3.